Consider the following 405-residue polypeptide: Cytoplasmic polyadenylated homeobox-like protein (405 aa).

Disordered stretches follow at residues 1 to 33 and 340 to 363; these read MNLD…KHRH and PWDL…QNNG. A compositionally biased stretch (basic and acidic residues) spans 13-23; sequence EEDHHNEERQT. The span at 24 to 33 shows a compositional bias: basic residues; sequence KNKRKTKHRH. The homeobox DNA-binding region spans 28–87; it reads KTKHRHKFSEELLQELKEIFGENCYPDYTTRKTLAIKFDCPVNVIDNWFQNKRARLPPAE. The span at 346 to 360 shows a compositional bias: low complexity; the sequence is QWSSAQSQLQSQLPQ.

It is found in the nucleus. Functionally, transcription factor that acts as activator. This chain is Cytoplasmic polyadenylated homeobox-like protein, found in Homo sapiens (Human).